Here is a 403-residue protein sequence, read N- to C-terminus: Ribosomal RNA large subunit methyltransferase I (403 aa).

The PUA domain occupies 9–88; it reads YPRLVLSKGR…ESIDIAFFTR (80 aa).

The protein belongs to the methyltransferase superfamily. RlmI family.

It localises to the cytoplasm. It catalyses the reaction cytidine(1962) in 23S rRNA + S-adenosyl-L-methionine = 5-methylcytidine(1962) in 23S rRNA + S-adenosyl-L-homocysteine + H(+). Its function is as follows. Specifically methylates the cytosine at position 1962 (m5C1962) of 23S rRNA. This Salmonella newport (strain SL254) protein is Ribosomal RNA large subunit methyltransferase I.